Consider the following 407-residue polypeptide: Carbamoyl phosphate synthase small chain (407 aa).

The interval 1 to 205 (MTETTSKTAP…LADGYGEQDT (205 aa)) is CPSase. L-glutamine contacts are provided by Ser-60, Gly-257, and Gly-259. Residues 209-397 (HVVALDFGVK…INLIREKKGE (189 aa)) enclose the Glutamine amidotransferase type-1 domain. The Nucleophile role is filled by Cys-286. Residues Leu-287, Gln-290, Asn-328, Gly-330, and Phe-331 each contribute to the L-glutamine site. Active-site residues include His-370 and Glu-372.

Belongs to the CarA family. In terms of assembly, composed of two chains; the small (or glutamine) chain promotes the hydrolysis of glutamine to ammonia, which is used by the large (or ammonia) chain to synthesize carbamoyl phosphate. Tetramer of heterodimers (alpha,beta)4.

The catalysed reaction is hydrogencarbonate + L-glutamine + 2 ATP + H2O = carbamoyl phosphate + L-glutamate + 2 ADP + phosphate + 2 H(+). The enzyme catalyses L-glutamine + H2O = L-glutamate + NH4(+). Its pathway is amino-acid biosynthesis; L-arginine biosynthesis; carbamoyl phosphate from bicarbonate: step 1/1. The protein operates within pyrimidine metabolism; UMP biosynthesis via de novo pathway; (S)-dihydroorotate from bicarbonate: step 1/3. Its function is as follows. Small subunit of the glutamine-dependent carbamoyl phosphate synthetase (CPSase). CPSase catalyzes the formation of carbamoyl phosphate from the ammonia moiety of glutamine, carbonate, and phosphate donated by ATP, constituting the first step of 2 biosynthetic pathways, one leading to arginine and/or urea and the other to pyrimidine nucleotides. The small subunit (glutamine amidotransferase) binds and cleaves glutamine to supply the large subunit with the substrate ammonia. This is Carbamoyl phosphate synthase small chain from Brucella anthropi (strain ATCC 49188 / DSM 6882 / CCUG 24695 / JCM 21032 / LMG 3331 / NBRC 15819 / NCTC 12168 / Alc 37) (Ochrobactrum anthropi).